The chain runs to 249 residues: Proteasome subunit alpha 2 (249 aa).

The residue at position 1 (Met1) is an N-acetylmethionine.

Belongs to the peptidase T1A family. The 20S proteasome core is composed of 14 alpha and 14 beta subunits that assemble into four stacked heptameric rings, resulting in a barrel-shaped structure. The two inner rings, each composed of seven catalytic beta subunits, are sandwiched by two outer rings, each composed of seven alpha subunits. H.volcanii produces at least 2 types of 20S proteasomes: an alpha1-beta proteasome and a proteasome containing all three subunits (alpha1, alpha2, and beta) that appears to be asymmetrical with homo-oligomeric alpha1 and alpha2 rings positioned on separate ends. The catalytic chamber with the active sites is on the inside of the barrel. Has probably a gated structure, the ends of the cylinder being occluded by the N-termini of the alpha-subunits. Is likely capped at one or both ends by the proteasome regulatory ATPase, PAN.

It is found in the cytoplasm. Its activity is regulated as follows. The formation of the proteasomal ATPase PAN-20S proteasome complex, via the docking of the C-termini of PAN into the intersubunit pockets in the alpha-rings, triggers opening of the gate for substrate entry. Interconversion between the open-gate and close-gate conformations leads to a dynamic regulation of the 20S proteasome proteolysis activity. Component of the proteasome core, a large protease complex with broad specificity involved in protein degradation. The H.volcanii alpha1-beta-alpha2 proteasome is able to cleave oligopeptides after Tyr and thus displays chymotrypsin-like activity. This Haloferax volcanii (strain ATCC 29605 / DSM 3757 / JCM 8879 / NBRC 14742 / NCIMB 2012 / VKM B-1768 / DS2) (Halobacterium volcanii) protein is Proteasome subunit alpha 2.